Reading from the N-terminus, the 426-residue chain is C2H2 type master regulator of conidiophore development brlA (426 aa).

2 disordered regions span residues 25–71 (CPSM…DRGT) and 281–302 (GVRL…KQSL). The segment covering 30–44 (SSFSPLESPTPTPTS) has biased composition (low complexity). Residues 45-58 (IYSQGSLASPSWPE) are compositionally biased toward polar residues. Positions 288 to 297 (PSRKMARKQP) are enriched in basic residues. 2 C2H2-type zinc fingers span residues 316 to 340 (FKCK…MKSH) and 346 to 371 (HVCW…TKTH). The segment at 384-426 (LDETSPDYNPDYRGPLTADGRPMPGGTLDESMPSREISMEWDE) is disordered.

It localises to the nucleus. BrlA, abaA and wetA are pivotal regulators of conidiophore development and conidium maturation. They act individually and together to regulate their own expression and that of numerous other sporulation-specific genes. Binds promoters of target genes at brlA response elements (BREs) containing the conserved sequence 5'-(C/A)(A/G)AGGG(G/A)-3'. Positively regulates expression of the gliotoxin biosynthetic gene cluster in actively growing vegetative cells, and likely bridges morphological and chemical development during the life-cycle. Regulates (directly or indirectly) the ergot cluster genes. Positively regulates expression of the fumiquinazoline C biosynthetic gene cluster. Positively regulates expression of the melanin biosynthetic gene cluster. Mediates repression of ribosomal protein gene expression in response to nitrogen depletion. In Aspergillus fumigatus (strain ATCC MYA-4609 / CBS 101355 / FGSC A1100 / Af293) (Neosartorya fumigata), this protein is C2H2 type master regulator of conidiophore development brlA.